The primary structure comprises 287 residues: UTP--glucose-1-phosphate uridylyltransferase 1 (287 aa).

Belongs to the UDPGP type 2 family.

The catalysed reaction is alpha-D-glucose 1-phosphate + UTP + H(+) = UDP-alpha-D-glucose + diphosphate. Its pathway is glycolipid metabolism; diglucosyl-diacylglycerol biosynthesis. In terms of biological role, catalyzes the formation of UDP-glucose from glucose-1-phosphate and UTP. This is an intermediate step in the biosynthesis of diglucosyl-diacylglycerol (Glc2-DAG), i.e. a glycolipid found in the membrane, which is also used as a membrane anchor for lipoteichoic acid (LTA). The chain is UTP--glucose-1-phosphate uridylyltransferase 1 (gtaB1) from Staphylococcus saprophyticus subsp. saprophyticus (strain ATCC 15305 / DSM 20229 / NCIMB 8711 / NCTC 7292 / S-41).